The primary structure comprises 247 residues: PF03932 family protein CutC (247 aa).

Belongs to the CutC family.

Its subcellular location is the cytoplasm. This Enterobacter sp. (strain 638) protein is PF03932 family protein CutC.